The primary structure comprises 136 residues: Histone H3.1/H3.2 (136 aa).

The interval 1–43 (MARTKQTARKSTGGKAPRKQLASKAARKSAPSTGGVKKPHRYK) is disordered. K5 bears the N6,N6,N6-trimethyllysine; alternate mark. The residue at position 5 (K5) is an N6,N6-dimethyllysine; alternate. 2 positions are modified to N6-methyllysine; alternate: K5 and K10. An N6-acetyllysine; alternate modification is found at K10. S11 is subject to Phosphoserine. K15 is subject to N6,N6-dimethyllysine; alternate. Residues K15, K19, K24, K28, and K37 each carry the N6-acetyllysine; alternate modification. N6-methyllysine; alternate is present on residues K19, K24, K28, and K37. Residues K28 and K37 each carry the N6,N6,N6-trimethyllysine; alternate modification. An N6,N6-dimethyllysine; alternate mark is found at K28 and K37. 2 positions are modified to N6-acetyllysine: K57 and K65. Position 80 is an N6,N6,N6-trimethyllysine; alternate (K80). Position 80 is an N6,N6-dimethyllysine; alternate (K80). N6-methyllysine; alternate is present on K80.

It belongs to the histone H3 family. In terms of assembly, the nucleosome is a histone octamer containing two molecules each of H2A, H2B, H3 and H4 assembled in one H3-H4 heterotetramer and two H2A-H2B heterodimers. The octamer wraps approximately 147 bp of DNA. Phosphorylated to form H3S10ph. H3S10ph promotes subsequent H3K14ac formation and is required for transcriptional activation through TBP recruitment to the promoters. In terms of processing, mono-, di- and trimethylated by the COMPASS complex to form H3K4me1/2/3. H3K4me activates gene expression by regulating transcription elongation and plays a role in telomere length maintenance. H3K4me enrichment correlates with transcription levels, and occurs in a 5' to 3' gradient with H3K4me3 enrichment at the 5'-end of genes, shifting to H3K4me2 and then H3K4me1. Methylated by SET2 to form H3K36me. H3K36me represses gene expression. Methylated by DOT1 to form H3K79me. H3K79me is required for association of SIR proteins with telomeric regions and for telomeric silencing. The COMPASS-mediated formation of H3K4me2/3 and the DOT1-mediated formation of H3K79me require H2BK123ub1. Post-translationally, acetylation of histone H3 leads to transcriptional activation. H3K14ac formation by GCN5 is promoted by H3S10ph. H3K14ac can also be formed by ESA1. H3K56ac formation occurs predominantly in newly synthesized H3 molecules during G1, S and G2/M of the cell cycle and may be involved in DNA repair.

The protein resides in the nucleus. It is found in the chromosome. Its function is as follows. Core component of nucleosome. Nucleosomes wrap and compact DNA into chromatin, limiting DNA accessibility to the cellular machineries which require DNA as a template. Histones thereby play a central role in transcription regulation, DNA repair, DNA replication and chromosomal stability. DNA accessibility is regulated via a complex set of post-translational modifications of histones, also called histone code, and nucleosome remodeling. The polypeptide is Histone H3.1/H3.2 (HHT1) (Lodderomyces elongisporus (strain ATCC 11503 / CBS 2605 / JCM 1781 / NBRC 1676 / NRRL YB-4239) (Yeast)).